A 659-amino-acid polypeptide reads, in one-letter code: UDP-glucuronate:xylan alpha-glucuronosyltransferase 1 (659 aa).

Residues 1–14 (MANSPAAPAPTTTT) show a composition bias toward low complexity. The segment at 1 to 20 (MANSPAAPAPTTTTGGDSRR) is disordered. A helical; Signal-anchor for type II membrane protein transmembrane segment spans residues 70-90 (FQIVKLLLFILLSATLFTIIY). 2 residues coordinate Mn(2+): D416 and D418. Substrate-binding positions include 416 to 418 (DAD), 445 to 447 (NSG), 472 to 476 (NGGDQ), and 526 to 531 (HYLGMK). H526 lines the Mn(2+) pocket.

It belongs to the glycosyltransferase 8 family. Glycogenin subfamily. Mn(2+) serves as cofactor.

The protein resides in the golgi apparatus membrane. In terms of biological role, glycosyltransferase required for the addition of both glucuronic acid and 4-O-methylglucuronic acid branches to xylan in stem cell walls. In association with GUX2, is responsible for almost all of the substitutions of the xylan backbone in stem glucuronoxylan. This Arabidopsis thaliana (Mouse-ear cress) protein is UDP-glucuronate:xylan alpha-glucuronosyltransferase 1 (GUX1).